The following is a 700-amino-acid chain: Glycine--tRNA ligase beta subunit (700 aa).

Belongs to the class-II aminoacyl-tRNA synthetase family. As to quaternary structure, tetramer of two alpha and two beta subunits.

The protein localises to the cytoplasm. The enzyme catalyses tRNA(Gly) + glycine + ATP = glycyl-tRNA(Gly) + AMP + diphosphate. This is Glycine--tRNA ligase beta subunit from Helicobacter pylori (strain Shi470).